We begin with the raw amino-acid sequence, 353 residues long: Probable arabinan endo-1,5-alpha-L-arabinosidase B (353 aa).

The signal sequence occupies residues 1 to 16 (MVLVATLFSLFTVSLC). Asp-39 acts as the Proton acceptor in catalysis. Residue Asn-194 is glycosylated (N-linked (GlcNAc...) asparagine). Positions 202–227 (HLAKHPKTERVNSQDQNPDPLCRDSS) are disordered. Catalysis depends on Glu-233, which acts as the Proton donor.

It belongs to the glycosyl hydrolase 43 family.

The protein localises to the secreted. It catalyses the reaction Endohydrolysis of (1-&gt;5)-alpha-arabinofuranosidic linkages in (1-&gt;5)-arabinans.. It functions in the pathway glycan metabolism; L-arabinan degradation. Its function is as follows. Endo-1,5-alpha-L-arabinanase involved in degradation of pectin. Its preferred substrate is linear 1,5-alpha-L-arabinan. The sequence is that of Probable arabinan endo-1,5-alpha-L-arabinosidase B (abnB) from Aspergillus oryzae (strain ATCC 42149 / RIB 40) (Yellow koji mold).